Reading from the N-terminus, the 566-residue chain is Phenylalanine--tRNA ligase beta subunit (566 aa).

The region spanning 287–362 is the B5 domain; the sequence is YFQEEVEFNV…IGEGLSSFNP (76 aa). Mg(2+) contacts are provided by Asp340, Asp346, Glu349, and Asp350.

Belongs to the phenylalanyl-tRNA synthetase beta subunit family. Type 2 subfamily. As to quaternary structure, tetramer of two alpha and two beta subunits. Mg(2+) serves as cofactor.

The protein localises to the cytoplasm. It carries out the reaction tRNA(Phe) + L-phenylalanine + ATP = L-phenylalanyl-tRNA(Phe) + AMP + diphosphate + H(+). This Borreliella burgdorferi (strain ATCC 35210 / DSM 4680 / CIP 102532 / B31) (Borrelia burgdorferi) protein is Phenylalanine--tRNA ligase beta subunit.